The primary structure comprises 122 residues: Large ribosomal subunit protein uL18 (122 aa).

The protein belongs to the universal ribosomal protein uL18 family. In terms of assembly, part of the 50S ribosomal subunit; part of the 5S rRNA/L5/L18/L25 subcomplex. Contacts the 5S and 23S rRNAs.

Its function is as follows. This is one of the proteins that bind and probably mediate the attachment of the 5S RNA into the large ribosomal subunit, where it forms part of the central protuberance. This Prochlorococcus marinus (strain MIT 9215) protein is Large ribosomal subunit protein uL18.